Here is a 150-residue protein sequence, read N- to C-terminus: Large ribosomal subunit protein bL9 (150 aa).

It belongs to the bacterial ribosomal protein bL9 family.

Its function is as follows. Binds to the 23S rRNA. This Paraburkholderia phytofirmans (strain DSM 17436 / LMG 22146 / PsJN) (Burkholderia phytofirmans) protein is Large ribosomal subunit protein bL9.